The following is a 959-amino-acid chain: Ribonucleoside-diphosphate reductase large subunit (959 aa).

Substrate-binding positions include Thr68, 83–84, and Gly112; that span reads SC. A disulfide bond links Cys84 and Cys626. The Proton acceptor role is filled by Asn270. In terms of domain architecture, DOD-type homing endonuclease spans 378 to 508; that stretch reads LPTLFGNSEH…IQLLLIGMGV (131 aa). Cys611 (cysteine radical intermediate) is an active-site residue. Glu613 acts as the Proton acceptor in catalysis. 751 to 755 contributes to the substrate binding site; the sequence is PTATS.

It belongs to the ribonucleoside diphosphate reductase large chain family. As to quaternary structure, heterotetramer composed of a homodimer of the large subunit (R1) and a homodimer of the small subunit (R2). Larger multisubunit protein complex are also active, composed of (R1)n(R2)n.

It catalyses the reaction a 2'-deoxyribonucleoside 5'-diphosphate + [thioredoxin]-disulfide + H2O = a ribonucleoside 5'-diphosphate + [thioredoxin]-dithiol. Under complex allosteric control mediated by deoxynucleoside triphosphates and ATP binding. The type of nucleotide bound at the specificity site determines substrate preference. It seems probable that ATP makes the enzyme reduce CDP and UDP, dGTP favors ADP reduction and dTTP favors GDP reduction. Ribonucleoside-diphosphate reductase holoenzyme provides the precursors necessary for viral DNA synthesis. Allows virus growth in non-dividing cells. Catalyzes the biosynthesis of deoxyribonucleotides from the corresponding ribonucleotides. This chain is Ribonucleoside-diphosphate reductase large subunit, found in Acheta domesticus (House cricket).